The sequence spans 418 residues: Glucose-1-phosphate adenylyltransferase (418 aa).

Residues Tyr104, Gly169, 184–185 (EK), and Ser202 contribute to the alpha-D-glucose 1-phosphate site.

It belongs to the bacterial/plant glucose-1-phosphate adenylyltransferase family. In terms of assembly, homotetramer.

It catalyses the reaction alpha-D-glucose 1-phosphate + ATP + H(+) = ADP-alpha-D-glucose + diphosphate. The protein operates within glycan biosynthesis; glycogen biosynthesis. Its function is as follows. Involved in the biosynthesis of ADP-glucose, a building block required for the elongation reactions to produce glycogen. Catalyzes the reaction between ATP and alpha-D-glucose 1-phosphate (G1P) to produce pyrophosphate and ADP-Glc. The polypeptide is Glucose-1-phosphate adenylyltransferase (Jannaschia sp. (strain CCS1)).